Reading from the N-terminus, the 123-residue chain is Small ribosomal subunit protein uS12 (123 aa).

D89 carries the 3-methylthioaspartic acid modification.

Belongs to the universal ribosomal protein uS12 family. In terms of assembly, part of the 30S ribosomal subunit. Contacts proteins S8 and S17. May interact with IF1 in the 30S initiation complex.

Functionally, with S4 and S5 plays an important role in translational accuracy. Its function is as follows. Interacts with and stabilizes bases of the 16S rRNA that are involved in tRNA selection in the A site and with the mRNA backbone. Located at the interface of the 30S and 50S subunits, it traverses the body of the 30S subunit contacting proteins on the other side and probably holding the rRNA structure together. The combined cluster of proteins S8, S12 and S17 appears to hold together the shoulder and platform of the 30S subunit. The protein is Small ribosomal subunit protein uS12 of Myxococcus xanthus.